A 539-amino-acid polypeptide reads, in one-letter code: Transcription factor prr1 (539 aa).

Residues 7–111 mediate DNA binding; it reads SSDFVRKLFN…LLDNIKRKAP (105 aa). T221 carries the phosphothreonine modification. Position 223 is a phosphoserine (S223). A compositionally biased stretch (polar residues) spans 251 to 263; that stretch reads GTAQPSLYNTPSS. Residues 251–281 form a disordered region; it reads GTAQPSLYNTPSSDYELANQEKPADSMASAA. The 115-residue stretch at 369-483 folds into the Response regulatory domain; it reads RILLVEDDEL…TLLQLLKKQL (115 aa). Residue D418 is modified to 4-aspartylphosphate.

This sequence in the N-terminal section; belongs to the HSF family.

It localises to the nucleus. Involved in oxidative stress. Transcription factor that acts upon trr1 and ctt1. This is Transcription factor prr1 (prr1) from Schizosaccharomyces pombe (strain 972 / ATCC 24843) (Fission yeast).